The primary structure comprises 633 residues: Transcriptional repressor p66-alpha (633 aa).

Basic and acidic residues predominate over residues 1–18 (MTEEACRTRSQKRALERD). Disordered regions lie at residues 1–59 (MTEE…PTQG) and 73–119 (RGEG…RVNG). Phosphothreonine is present on residues T20 and T49. The span at 86–99 (RTSHSDMKSERRPP) shows a compositional bias: basic and acidic residues. K93 participates in a covalent cross-link: Glycyl lysine isopeptide (Lys-Gly) (interchain with G-Cter in SUMO2). Residues S100, S107, S113, S114, and S137 each carry the phosphoserine modification. Polar residues predominate over residues 108–119 (DNEQPSSPRVNG). A coiled-coil region spans residues 139-174 (EERERMIKQLKEELRLEEAKLVLLKKLRQSQIQKEA). Residues 144-178 (MIKQLKEELRLEEAKLVLLKKLRQSQIQKEATAQK) are CR1; interaction with HDAC1, HDAC2, MBD2 and MTA2. Positions 172–188 (KEATAQKPTGSVGSTVT) are enriched in polar residues. Residues 172 to 238 (KEATAQKPTG…QASSKLGPQA (67 aa)) are disordered. A Glycyl lysine isopeptide (Lys-Gly) (interchain with G-Cter in SUMO2) cross-link involves residue K178. Positions 181-295 (GSVGSTVTTP…IIQQGLIRVA (115 aa)) are interaction with ZMYND8. The residue at position 189 (T189) is a Phosphothreonine. Over residues 196–212 (GTQNIPAGKPSLQTSSA) the composition is skewed to polar residues. A Glycyl lysine isopeptide (Lys-Gly) (interchain with G-Cter in SUMO2) cross-link involves residue K204. R225 carries the omega-N-methylarginine modification. Residues 228-238 (QQASSKLGPQA) show a composition bias toward polar residues. Residue K233 forms a Glycyl lysine isopeptide (Lys-Gly) (interchain with G-Cter in SUMO2) linkage. R249, R258, and R273 each carry omega-N-methylarginine. Residue S275 is modified to Phosphoserine. Residue R285 is modified to Omega-N-methylarginine. Phosphoserine occurs at positions 340 and 343. Residues 340–480 (SPASRQAAAK…EIEQRLLQQG (141 aa)) form a CR2; histone tail-binding and interaction with CHD4 and CDK2AP1 region. A GATA-type zinc finger spans residues 411-464 (SREPYMCAQCKTDFTCRWREEKSGAIMCENCMTTNQKKALKVEHTSRLKAAFVK). Residues K464 and K487 each participate in a glycyl lysine isopeptide (Lys-Gly) (interchain with G-Cter in SUMO2) cross-link. Phosphoserine is present on S512. R539 bears the Asymmetric dimethylarginine; alternate mark. The residue at position 539 (R539) is an Omega-N-methylarginine; alternate. 2 positions are modified to phosphoserine: S546 and S548. Residue K550 forms a Glycyl lysine isopeptide (Lys-Gly) (interchain with G-Cter in SUMO2) linkage. S556 is modified (phosphoserine). Residues 561-585 (VSRTGRHSERTVSAGKGSATSNWKK) form a disordered region. K585 is covalently cross-linked (Glycyl lysine isopeptide (Lys-Gly) (interchain with G-Cter in SUMO2)). S598 is modified (phosphoserine). K605 is covalently cross-linked (Glycyl lysine isopeptide (Lys-Gly) (interchain with G-Cter in SUMO2)).

Homooligomer. Component of the nucleosome remodeling and deacetylase (NuRD) repressor complex, composed of core proteins MTA1, MTA2, MTA3, RBBP4, RBBP7, HDAC1, HDAC2, MBD2, MBD3, and peripherally associated proteins CDK2AP1, CDK2AP2, GATAD2A, GATAD2B, CHD3, CHD4 and CHD5. The exact stoichiometry of the NuRD complex is unknown, and some subunits such as MBD2 and MBD3, GATAD2A and GATAD2B, and CHD3, CHD4 and CHD5 define mutually exclusive NuRD complexes. Component of the MeCP1 histone deacetylase complex. Interacts with CDK2AP1. Interacts with CHD4. Interacts with ERCC6. Interacts with HDAC1. Interacts with HDAC2. Interacts with MBD2; this interaction is required for the enhancement of MBD2-mediated repression and for targeting to the chromatin. Interacts with MBD3. Interacts with MTA2. Interacts with ZMYND8. Interacts with histone tails, including that of histones H2A, H2B, H3 and H4, the interaction is reduced by histone acetylation. As to expression, ubiquitous, both in fetal and adult tissues.

It localises to the nucleus speckle. The protein resides in the nucleus. It is found in the chromosome. Functionally, transcriptional repressor. Acts as a component of the histone deacetylase NuRD complex which participates in the remodeling of chromatin. Enhances MBD2-mediated repression. Efficient repression requires the presence of GATAD2B. The polypeptide is Transcriptional repressor p66-alpha (GATAD2A) (Homo sapiens (Human)).